Here is a 506-residue protein sequence, read N- to C-terminus: Galactose/methyl galactoside import ATP-binding protein MglA (506 aa).

ABC transporter domains follow at residues 14–249 (LTMT…VGRE) and 264–506 (VILE…AKYL). 46–53 (GENGAGKS) provides a ligand contact to ATP.

It belongs to the ABC transporter superfamily. Galactose/methyl galactoside importer (TC 3.A.1.2.3) family. In terms of assembly, the complex is composed of one ATP-binding protein (MglA), two transmembrane proteins (MglC) and a solute-binding protein (MglB).

It localises to the cell inner membrane. The catalysed reaction is D-galactose(out) + ATP + H2O = D-galactose(in) + ADP + phosphate + H(+). It carries out the reaction methyl beta-D-galactoside(out) + ATP + H2O = methyl beta-D-galactoside(in) + ADP + phosphate + H(+). In terms of biological role, part of the ABC transporter complex MglABC involved in galactose/methyl galactoside import. Responsible for energy coupling to the transport system. The polypeptide is Galactose/methyl galactoside import ATP-binding protein MglA (Mannheimia succiniciproducens (strain KCTC 0769BP / MBEL55E)).